The sequence spans 480 residues: Voltage-gated potassium channel regulatory subunit KCNG2 (480 aa).

Disordered regions lie at residues 1–25 (MARL…GRGG) and 144–167 (AAEA…LGSG). Topologically, residues 1–187 (MARLPGHPEV…DVVENPHSGL (187 aa)) are cytoplasmic. The helical transmembrane segment at 188-209 (AGKLFAYVSVAFVAVTAVGLCL) threads the bilayer. Residues 210 to 230 (STMPDVRAEEERGECSTKCRN) are Extracellular-facing. The chain crosses the membrane as a helical span at residues 231–252 (LFVLETVCVAWFSFEFLLRSLQ). Residues 253–263 (AESKCAFLRTP) lie on the Cytoplasmic side of the membrane. The helical transmembrane segment at 264 to 284 (LAIIDILAILPFYVSLLAGLA) threads the bilayer. Topologically, residues 285–296 (AGPTGSKMLERA) are extracellular. Residues 297–317 (GLVLRLLRALRVLYVMRLARH) form a helical; Voltage-sensor membrane-spanning segment. The Cytoplasmic portion of the chain corresponds to 318-332 (SLGLRSLGLTVRRCA). Residues 333 to 354 (REFGLLLLFLCVAMALFAPLVH) form a helical membrane-spanning segment. Residues 355-369 (LAERELGAHRDFSSV) are Extracellular-facing. An intramembrane region (helical) is located at residues 370-381 (PASYWWAVISMT). Residues 382-387 (TVGYGD) carry the Selectivity filter motif. An intramembrane segment occupies 382-389 (TVGYGDMV). The Extracellular portion of the chain corresponds to 390 to 396 (PRSLPGQ). Residues 397–425 (VVALSSILSGILLMAFPVTSIFHTFSRSY) traverse the membrane as a helical segment. Residues 426-480 (SELKEQQQRAASPEPVLREDSTRDDSTRSASATEDSSQDPETAGAAGSLPGPVGP) lie on the Cytoplasmic side of the membrane. The interval 429 to 480 (KEQQQRAASPEPVLREDSTRDDSTRSASATEDSSQDPETAGAAGSLPGPVGP) is disordered. A compositionally biased stretch (basic and acidic residues) spans 441–452 (VLREDSTRDDST).

This sequence belongs to the potassium channel family. G (TC 1.A.1.2) subfamily. Kv6.2/KCNG2 sub-subfamily. Heterodimer with KCNB1. As to expression, highly expressed in heart, in particular in right and left atrium, and detected at lower levels in the right and left ventricle.

Its subcellular location is the cell membrane. Functionally, regulatory alpha-subunit of the voltage-gated potassium (Kv) channel which, when coassembled with KCNB1, can modulate the kinetics and conductance-voltage relationship. Modulates channel activity by shifting the threshold and the half-maximal activation to more negative values. Potassium channel subunit that does not form functional channels by itself. The chain is Voltage-gated potassium channel regulatory subunit KCNG2 from Rattus norvegicus (Rat).